The primary structure comprises 158 residues: 2-C-methyl-D-erythritol 2,4-cyclodiphosphate synthase (158 aa).

Positions 9 and 11 each coordinate a divalent metal cation. 4-CDP-2-C-methyl-D-erythritol 2-phosphate-binding positions include aspartate 9–histidine 11 and histidine 35–serine 36. An a divalent metal cation-binding site is contributed by histidine 43. 4-CDP-2-C-methyl-D-erythritol 2-phosphate-binding positions include aspartate 57–glycine 59 and arginine 143.

It belongs to the IspF family. In terms of assembly, homotrimer. The cofactor is a divalent metal cation.

The enzyme catalyses 4-CDP-2-C-methyl-D-erythritol 2-phosphate = 2-C-methyl-D-erythritol 2,4-cyclic diphosphate + CMP. Its pathway is isoprenoid biosynthesis; isopentenyl diphosphate biosynthesis via DXP pathway; isopentenyl diphosphate from 1-deoxy-D-xylulose 5-phosphate: step 4/6. Its function is as follows. Involved in the biosynthesis of isopentenyl diphosphate (IPP) and dimethylallyl diphosphate (DMAPP), two major building blocks of isoprenoid compounds. Catalyzes the conversion of 4-diphosphocytidyl-2-C-methyl-D-erythritol 2-phosphate (CDP-ME2P) to 2-C-methyl-D-erythritol 2,4-cyclodiphosphate (ME-CPP) with a corresponding release of cytidine 5-monophosphate (CMP). This is 2-C-methyl-D-erythritol 2,4-cyclodiphosphate synthase from Chromobacterium violaceum (strain ATCC 12472 / DSM 30191 / JCM 1249 / CCUG 213 / NBRC 12614 / NCIMB 9131 / NCTC 9757 / MK).